The chain runs to 878 residues: Interleukin-3 receptor class 2 subunit beta (878 aa).

Residues 1–22 (MDQQMALTWGLCYMALVALCWG) form the signal peptide. Topologically, residues 23–440 (HEVTEEEETV…SNEYTWTTDW (418 aa)) are extracellular. An intrachain disulfide couples Cys39 to Cys49. N-linked (GlcNAc...) asparagine glycosylation is present at Asn62. Cys78 and Cys95 are oxidised to a cystine. The 106-residue stretch at 139-244 (PPKDIHISPS…PEVHWDSQPG (106 aa)) folds into the Fibronectin type-III 1 domain. The disordered stretch occupies residues 223 to 244 (GSSLSGRPSRWSPEVHWDSQPG). Cystine bridges form between Cys254/Cys264 and Cys293/Cys310. The Fibronectin type-III 2 domain occupies 343–438 (QMEPPILNQT…EWSNEYTWTT (96 aa)). N-linked (GlcNAc...) asparagine glycosylation is present at Asn350. A WSXWS motif motif is present at residues 427–431 (WSEWS). The helical transmembrane segment at 441–462 (VMPTLWIVLILVFLIFTLLLAL) threads the bilayer. Residues 463-878 (HFGRVYGYRT…AIQFFKSLKY (416 aa)) lie on the Cytoplasmic side of the membrane. A Box 1 motif motif is present at residues 476–484 (WKEKIPNPS). 2 disordered regions span residues 539–620 (LTIE…GGSL) and 660–709 (SSLE…MASD). Positions 554–570 (PDTTPAASSESTEQLPN) are enriched in polar residues. Residues 671 to 689 (EPKENPPVELSVEKQEARD) show a composition bias toward basic and acidic residues. Phosphoserine is present on residues Ser752 and Ser754. Position 765 is a phosphotyrosine (Tyr765). 2 disordered regions span residues 771 to 810 (SVSQ…PHPE) and 829 to 849 (PGSL…ETED).

The protein belongs to the type I cytokine receptor family. Type 4 subfamily. In terms of assembly, heterodimer of an alpha and a beta subunit.

Its subcellular location is the membrane. Functionally, in mouse, there are two classes of high-affinity IL3 receptors. One contains this IL3-specific beta subunit and the other contains the beta subunit also shared by high-affinity IL5 and GM-CSF receptors. The protein is Interleukin-3 receptor class 2 subunit beta (Csf2rb2) of Mus musculus (Mouse).